Reading from the N-terminus, the 423-residue chain is uncharacterized protein (423 aa).

This sequence belongs to the IIV-6 198R family.

This is an uncharacterized protein from Aedes vexans (Inland floodwater mosquito).